We begin with the raw amino-acid sequence, 21 residues long: Cardiotoxin-like basic polypeptide ah (21 aa).

This sequence belongs to the three-finger toxin family. Short-chain subfamily. Orphan group XV sub-subfamily. Post-translationally, contains 4 disulfide bonds. Expressed by the venom gland.

The protein resides in the secreted. It is found in the target cell membrane. Has hemolytic activity under low-lecithin conditions. Has low cytotoxic activity. Inhibits the expression of VEGF and bFGF in human non-small-cell lung cancer cell line NCI-H1299 in a dose-dependent manner. The polypeptide is Cardiotoxin-like basic polypeptide ah (Naja atra (Chinese cobra)).